We begin with the raw amino-acid sequence, 409 residues long: Elongation factor Tu, chloroplastic (409 aa).

Residues 10 to 214 form the tr-type G domain; sequence KQHVNIGTIG…NVDTYIPTPV (205 aa). The G1 stretch occupies residues 19–26; it reads GHVDHGKT. 19 to 26 is a binding site for GTP; sequence GHVDHGKT. Thr26 contacts Mg(2+). The interval 60–64 is G2; it reads GITIN. A G3 region spans residues 81–84; that stretch reads DCPG. Residues 81-85 and 136-139 each bind GTP; these read DCPGH and NKED. Residues 136 to 139 form a G4 region; sequence NKED. The G5 stretch occupies residues 174–176; that stretch reads SAL.

The protein belongs to the TRAFAC class translation factor GTPase superfamily. Classic translation factor GTPase family. EF-Tu/EF-1A subfamily.

Its subcellular location is the plastid. It localises to the chloroplast. The enzyme catalyses GTP + H2O = GDP + phosphate + H(+). In terms of biological role, GTP hydrolase that promotes the GTP-dependent binding of aminoacyl-tRNA to the A-site of ribosomes during protein biosynthesis. In Tupiella akineta (Green alga), this protein is Elongation factor Tu, chloroplastic (tufA).